Here is a 199-residue protein sequence, read N- to C-terminus: Pyridoxal 5'-phosphate synthase subunit PdxT (199 aa).

52-54 (GES) contributes to the L-glutamine binding site. Residue Cys84 is the Nucleophile of the active site. L-glutamine-binding positions include Arg115 and 143–144 (IR). Residues His179 and Glu181 each act as charge relay system in the active site.

This sequence belongs to the glutaminase PdxT/SNO family. In the presence of PdxS, forms a dodecamer of heterodimers. Only shows activity in the heterodimer.

The catalysed reaction is aldehydo-D-ribose 5-phosphate + D-glyceraldehyde 3-phosphate + L-glutamine = pyridoxal 5'-phosphate + L-glutamate + phosphate + 3 H2O + H(+). It catalyses the reaction L-glutamine + H2O = L-glutamate + NH4(+). It participates in cofactor biosynthesis; pyridoxal 5'-phosphate biosynthesis. Catalyzes the hydrolysis of glutamine to glutamate and ammonia as part of the biosynthesis of pyridoxal 5'-phosphate. The resulting ammonia molecule is channeled to the active site of PdxS. This chain is Pyridoxal 5'-phosphate synthase subunit PdxT, found in Methanosarcina mazei (strain ATCC BAA-159 / DSM 3647 / Goe1 / Go1 / JCM 11833 / OCM 88) (Methanosarcina frisia).